The sequence spans 249 residues: DNA repair protein RecO (249 aa).

The protein belongs to the RecO family.

Its function is as follows. Involved in DNA repair and RecF pathway recombination. This is DNA repair protein RecO from Polaromonas naphthalenivorans (strain CJ2).